The primary structure comprises 218 residues: Regulator of G-protein signaling 20 (218 aa).

Residues 1–10 (MGSERTEMRK) are compositionally biased toward basic and acidic residues. Residues 1–26 (MGSERTEMRKRQMAATQETPGTAQAQ) form a disordered region. Residues 14 to 26 (AATQETPGTAQAQ) are compositionally biased toward polar residues. The RGS domain maps to 92–208 (SFDKLMLTPA…MNSAIYKDLL (117 aa)).

Forms a complex with G(alpha)z/i2 subunits and mu-opioid receptors; the formation of this complex results in mu-opioid receptor desensitization. Interacts with OPRM1. Post-translationally, fatty acylated. Heavily palmitoylated in the cysteine string motif. N- and O-glycosylated in synapsomal membranes. In terms of processing, sumoylated by SUMO1 and SUM02 in synaptosomes. The sumoylated forms act as a scaffold for sequestering mu-opioid receptor-activated G(alpha) subunits.

The protein resides in the membrane. The protein localises to the nucleus. It is found in the cytoplasm. Its function is as follows. Inhibits signal transduction by increasing the GTPase activity of G protein alpha subunits thereby driving them into their inactive GDP-bound form. Binds selectively to G(z)-alpha and G(alpha)-i2 subunits, accelerates their GTPase activity and regulates their signaling activities. The G(z)-alpha activity is inhibited by the phosphorylation and palmitoylation of the G-protein. Negatively regulates mu-opioid receptor-mediated activation of the G-proteins. In Gallus gallus (Chicken), this protein is Regulator of G-protein signaling 20 (RGS20).